The chain runs to 248 residues: MNFYRSSIISQIIKYNRRLAKSIICEDDSQIITLTAFVNQCLWCHKRVSVSAILLTTDNKILVCNRRDSFLYSEIIRTRNMFRKKRLFLNYSNYLNKQERSILSSFFSLDPATADNDRIDAIYPGGIPKRGENVPECLSREIKEEVNIDNSFVFIDTRFFIHGIIEDTIINKFFEVIFFVGRISLTSDQIIDTFKSNHEIKDLIFLDPNSGNGLQYEIAKYALDTAKLKCYGHRGCYYESLKKLTEDD.

The Nudix hydrolase domain occupies H45 to K227. Positions G126–N147 match the Nudix box motif. E132 lines the Mg(2+) pocket. E141 acts as the Nucleophile in catalysis. Residue E145 participates in Mn(2+) binding. Mg(2+) is bound at residue D167.

It belongs to the Nudix hydrolase family. Mg(2+) is required as a cofactor. The cofactor is Mn(2+).

It localises to the host mitochondrion. Decapping enzyme that remove the protective 5'-cap from both host and viral mRNAs to commit transcripts for decay by the cellular exonuclease XRN1. Preferentially targets spliced mRNAs and since all viral genes are intronless, it preferentially targets host over viral transcripts. Acceleration of the turnover of cellular transcripts promotes the shutoff of host protein synthesis and therefore diminish the magnitude of antiviral response. The protein is mRNA-decapping protein OPG122 (OPG122) of Bos taurus (Bovine).